The following is a 395-amino-acid chain: Prostaglandin D2 receptor 2 (395 aa).

Topologically, residues 1 to 33 (MSANATLKPLCPILEQMSRLQSHSNTSIRYIDH) are extracellular. N-linked (GlcNAc...) asparagine glycosylation is found at N4 and N25. A helical transmembrane segment spans residues 34 to 56 (AAVLLHGLASLLGLVENGVILFV). The Cytoplasmic portion of the chain corresponds to 57 to 67 (VGCRMRQTVVT). Residues 68-89 (TWVLHLALSDLLASASLPFFTY) form a helical membrane-spanning segment. Over 90–106 (FLAVGHSWELGTTFCKL) the chain is Extracellular. C104 and C182 are joined by a disulfide. The helical transmembrane segment at 107-127 (HSSIFFLNMFASGFLLSAISL) threads the bilayer. Residues 128–146 (DRCLQVVRPVWAQNHRTVA) lie on the Cytoplasmic side of the membrane. Residues 147–168 (AAHKVCLVLWALAVLNTVPYFV) form a helical membrane-spanning segment. At 169–210 (FRDTISRLDGRIMCYYNVLLLNPGPDRDATCNSRQVALAVSK) the chain is on the extracellular side. The chain crosses the membrane as a helical span at residues 211–231 (FLLAFLVPLAIIASSHAAVSL). Residues 232–247 (RLQHRGRRRPGRFVRL) lie on the Cytoplasmic side of the membrane. A helical membrane pass occupies residues 248-269 (VAAVVAAFALCWGPYHVFSLLE). Residues 270 to 288 (ARAHANPGLRPLVWRGLPF) are Extracellular-facing. The chain crosses the membrane as a helical span at residues 289–308 (VTSLAFFNSVANPVLYVLTC). Over 309 to 395 (PDMLRKLRRS…LNRALSSTSS (87 aa)) the chain is Cytoplasmic. The Involved in the recycling of CRTH2 signature appears at 330–333 (DSEL). 2 positions are modified to phosphoserine: S331 and S345. Positions 333-363 (LGGAGSSRRRRTSSTARSASPLALCSRPEEP) are disordered.

It belongs to the G-protein coupled receptor 1 family. In terms of processing, phosphorylated. As to expression, widespread expression. High expression in stomach, small intestine, heart and thymus. Intermediate expression in colon, spinal cord and peripheral blood and low expression in brain, skeletal muscle and spleen. Expressed also on Th2- and Tc2- type cells, eosinophils and basophils.

Its subcellular location is the cell membrane. In terms of biological role, receptor for prostaglandin D2 (PGD2). Coupled to the G(i)-protein. Receptor activation may result in pertussis toxin-sensitive decreases in cAMP levels and Ca(2+) mobilization. PI3K signaling is also implicated in mediating PTGDR2 effects. PGD2 induced receptor internalization. CRTH2 internalization can be regulated by diverse kinases such as, PKC, PKA, GRK2, GPRK5/GRK5 and GRK6. Receptor activation is responsible, at least in part, in immune regulation and allergic/inflammation responses. The sequence is that of Prostaglandin D2 receptor 2 (PTGDR2) from Homo sapiens (Human).